A 589-amino-acid polypeptide reads, in one-letter code: Threonine--tRNA ligase (589 aa).

Residues 191–487 (DHRKIGKNLG…LLEQTKGNFP (297 aa)) are catalytic. Zn(2+)-binding residues include Cys284, His335, and His464.

Belongs to the class-II aminoacyl-tRNA synthetase family. In terms of assembly, homodimer. It depends on Zn(2+) as a cofactor.

The protein resides in the cytoplasm. The enzyme catalyses tRNA(Thr) + L-threonine + ATP = L-threonyl-tRNA(Thr) + AMP + diphosphate + H(+). Its function is as follows. Catalyzes the attachment of threonine to tRNA(Thr) in a two-step reaction: L-threonine is first activated by ATP to form Thr-AMP and then transferred to the acceptor end of tRNA(Thr). Also edits incorrectly charged L-seryl-tRNA(Thr). This chain is Threonine--tRNA ligase, found in Mycoplasmopsis pulmonis (strain UAB CTIP) (Mycoplasma pulmonis).